A 131-amino-acid polypeptide reads, in one-letter code: Snaclec coagulation factor IX/factor X-binding protein subunit A (131 aa).

The region spanning 1–131 is the C-type lectin domain; that stretch reads DCLPGWSSHE…EEPQRFTCEI (131 aa). Disulfide bonds link C2–C13, C30–C129, and C104–C121. Residues S41, E43, and E47 each coordinate Ca(2+). E130 provides a ligand contact to Ca(2+).

The protein belongs to the snaclec family. In terms of assembly, heterodimer of subunits A and B; disulfide-linked. Expressed by the venom gland.

The protein resides in the secreted. Anticoagulant protein which binds to coagulation factor IX (F9) and coagulation factor X (F10) in the presence of calcium. It may bind the gamma-carboxyglutamic acid-domain regions of factors with a 1 to 1 stoichiometry. The dissociation constant (K(d)) are 6.6 nM for factor IX (F9) and 125 nM for factor X (F10). Does not bind carbohydrates. The polypeptide is Snaclec coagulation factor IX/factor X-binding protein subunit A (Echis carinatus (Saw-scaled viper)).